The primary structure comprises 251 residues: BRI3-binding protein (251 aa).

4 consecutive transmembrane segments (helical) span residues 13-33 (AGLL…PGAQ), 125-145 (ALLL…TLGF), 146-166 (TFSV…VVLF), and 185-205 (VLPL…GFYW). Residues 217–247 (NPSVEEKLEHLEKQVRLLNIRLNRVLESLDR) are a coiled coil. The residue at position 229 (K229) is an N6-acetyllysine. Phosphoserine is present on S248.

In terms of assembly, interacts with LETMD1. Interacts with BRI3 (isoforms 1 and 2); the interaction with isoform 2 is weaker than with isoform 1. Interacts with BRI3; the interaction is weak. Interacts with TMEM238L. As to expression, most abundantly expressed in brain, liver and kidney. Overexpressed in leukemia and lymphoma cell lines, as well as in various carcinomas.

The protein resides in the mitochondrion outer membrane. In terms of biological role, involved in tumorigenesis and may function by stabilizing p53/TP53. In Homo sapiens (Human), this protein is BRI3-binding protein.